The chain runs to 434 residues: Ribosomal protein uS12 methylthiotransferase RimO (434 aa).

Positions 9-125 (PAIFLLSLGC…VLAAIGAKYR (117 aa)) constitute an MTTase N-terminal domain. The [4Fe-4S] cluster site is built by Cys-18, Cys-54, Cys-88, Cys-149, Cys-153, and Cys-156. A Radical SAM core domain is found at 135-364 (LTPPHYAFLK…MELQEGISAS (230 aa)). Residues 367 to 434 (RKLEGQTLKV…AYELFGRISG (68 aa)) form the TRAM domain.

This sequence belongs to the methylthiotransferase family. RimO subfamily. [4Fe-4S] cluster serves as cofactor.

It localises to the cytoplasm. It catalyses the reaction L-aspartate(89)-[ribosomal protein uS12]-hydrogen + (sulfur carrier)-SH + AH2 + 2 S-adenosyl-L-methionine = 3-methylsulfanyl-L-aspartate(89)-[ribosomal protein uS12]-hydrogen + (sulfur carrier)-H + 5'-deoxyadenosine + L-methionine + A + S-adenosyl-L-homocysteine + 2 H(+). Catalyzes the methylthiolation of an aspartic acid residue of ribosomal protein uS12. This Chlorobaculum tepidum (strain ATCC 49652 / DSM 12025 / NBRC 103806 / TLS) (Chlorobium tepidum) protein is Ribosomal protein uS12 methylthiotransferase RimO.